Consider the following 669-residue polypeptide: UvrABC system protein B (669 aa).

The region spanning 26–183 (TNFHAGIAKQ…RHLTELQYTR (158 aa)) is the Helicase ATP-binding domain. 39 to 46 (GVTGSGKT) contacts ATP. The Beta-hairpin motif lies at 92-115 (YYDYYQPEAYVPASDTFIEKDSSI). In terms of domain architecture, Helicase C-terminal spans 431-597 (QVDDLISQIN…SVVRPISDIL (167 aa)). The 36-residue stretch at 631-666 (AAQMKVLEQKMYQHARDLEFEDAARIRDQIQRLREA) folds into the UVR domain.

The protein belongs to the UvrB family. Forms a heterotetramer with UvrA during the search for lesions. Interacts with UvrC in an incision complex.

Its subcellular location is the cytoplasm. The UvrABC repair system catalyzes the recognition and processing of DNA lesions. A damage recognition complex composed of 2 UvrA and 2 UvrB subunits scans DNA for abnormalities. Upon binding of the UvrA(2)B(2) complex to a putative damaged site, the DNA wraps around one UvrB monomer. DNA wrap is dependent on ATP binding by UvrB and probably causes local melting of the DNA helix, facilitating insertion of UvrB beta-hairpin between the DNA strands. Then UvrB probes one DNA strand for the presence of a lesion. If a lesion is found the UvrA subunits dissociate and the UvrB-DNA preincision complex is formed. This complex is subsequently bound by UvrC and the second UvrB is released. If no lesion is found, the DNA wraps around the other UvrB subunit that will check the other stand for damage. This chain is UvrABC system protein B, found in Xylella fastidiosa (strain M23).